Here is a 373-residue protein sequence, read N- to C-terminus: 3-dehydroquinate synthase (373 aa).

NAD(+) contacts are provided by residues 67-72, 101-105, 125-126, lysine 138, and lysine 147; these read EGEQAK, GVVLD, and TT. Residues glutamate 180, histidine 240, and histidine 256 each contribute to the Zn(2+) site.

It belongs to the sugar phosphate cyclases superfamily. Dehydroquinate synthase family. It depends on NAD(+) as a cofactor. The cofactor is Co(2+). Requires Zn(2+) as cofactor.

The protein localises to the cytoplasm. It carries out the reaction 7-phospho-2-dehydro-3-deoxy-D-arabino-heptonate = 3-dehydroquinate + phosphate. It participates in metabolic intermediate biosynthesis; chorismate biosynthesis; chorismate from D-erythrose 4-phosphate and phosphoenolpyruvate: step 2/7. Catalyzes the conversion of 3-deoxy-D-arabino-heptulosonate 7-phosphate (DAHP) to dehydroquinate (DHQ). The protein is 3-dehydroquinate synthase (aroB) of Chlamydia muridarum (strain MoPn / Nigg).